Consider the following 444-residue polypeptide: L-cysteine:1D-myo-inositol 2-amino-2-deoxy-alpha-D-glucopyranoside ligase (444 aa).

Residue Cys66 coordinates Zn(2+). L-cysteinyl-5'-AMP contacts are provided by residues 66–69 (CGIT), Thr81, and 104–106 (NVT). The 'HIGH' region signature appears at 68 to 78 (ITPYDATHLGH). The 'ERGGDP' region motif lies at 206–211 (EHGGDP). L-cysteinyl-5'-AMP is bound at residue Trp246. Cys250 contributes to the Zn(2+) binding site. Residue 268–270 (GSD) participates in L-cysteinyl-5'-AMP binding. His275 provides a ligand contact to Zn(2+). Val302 lines the L-cysteinyl-5'-AMP pocket. The 'KMSKS' region motif lies at 308 to 312 (KMSKS).

Belongs to the class-I aminoacyl-tRNA synthetase family. MshC subfamily. As to quaternary structure, monomer. Requires Zn(2+) as cofactor.

It carries out the reaction 1D-myo-inositol 2-amino-2-deoxy-alpha-D-glucopyranoside + L-cysteine + ATP = 1D-myo-inositol 2-(L-cysteinylamino)-2-deoxy-alpha-D-glucopyranoside + AMP + diphosphate + H(+). Catalyzes the ATP-dependent condensation of GlcN-Ins and L-cysteine to form L-Cys-GlcN-Ins. This is L-cysteine:1D-myo-inositol 2-amino-2-deoxy-alpha-D-glucopyranoside ligase from Parafrankia sp. (strain EAN1pec).